The primary structure comprises 1264 residues: Valine--tRNA ligase (1264 aa).

Ser-2 carries the post-translational modification N-acetylserine. A GST C-terminal domain is found at 89 to 219 (GSRAAVLVQQ…YSGARPLSHQ (131 aa)). Residues 217 to 296 (SHQPGPEAPA…GEKKDVSGPM (80 aa)) form a disordered region. Composition is skewed to basic and acidic residues over residues 234 to 248 (LKKE…EKFQ) and 261 to 275 (GEKK…KRDP). The short motif at 344–354 (PNVTGSLHLGH) is the 'HIGH' region element. 2 positions are modified to phosphoserine: Ser-437 and Ser-527. The residue at position 645 (Lys-645) is an N6-acetyllysine. The 'KMSKS' region motif lies at 862-866 (KMSKS). An ATP-binding site is contributed by Lys-865.

The protein belongs to the class-I aminoacyl-tRNA synthetase family. As to quaternary structure, forms high-molecular-mass aggregates with elongation factor 1.

It carries out the reaction tRNA(Val) + L-valine + ATP = L-valyl-tRNA(Val) + AMP + diphosphate. Can be regulated by protein kinase C-dependent phosphorylation. Catalyzes the attachment of valine to tRNA(Val). The sequence is that of Valine--tRNA ligase from Homo sapiens (Human).